A 318-amino-acid polypeptide reads, in one-letter code: UDP-N-acetylenolpyruvoylglucosamine reductase (318 aa).

Positions 39–202 constitute an FAD-binding PCMH-type domain; the sequence is VGGPADLLVR…TRVQLTLRPG (164 aa). Arg-182 is an active-site residue. Positions 214 to 223 are enriched in basic and acidic residues; sequence DRDGRRRTQP. Positions 214–235 are disordered; it reads DRDGRRRTQPLDRPTFGSTFTN. Ser-231 (proton donor) is an active-site residue. The active site involves Glu-301.

The protein belongs to the MurB family. FAD is required as a cofactor.

Its subcellular location is the cytoplasm. The catalysed reaction is UDP-N-acetyl-alpha-D-muramate + NADP(+) = UDP-N-acetyl-3-O-(1-carboxyvinyl)-alpha-D-glucosamine + NADPH + H(+). It participates in cell wall biogenesis; peptidoglycan biosynthesis. Cell wall formation. The chain is UDP-N-acetylenolpyruvoylglucosamine reductase from Anaeromyxobacter sp. (strain Fw109-5).